A 385-amino-acid chain; its full sequence is Period circadian protein (385 aa).

Disordered regions lie at residues 28-121 (TAPV…VPPV), 169-189 (GPGP…WEGE), and 322-351 (SPAS…TSQG). Residues 71–93 (SGNFTTGSNLHMSSVTNTSNAGT) show a composition bias toward low complexity. Residues 94–115 (GTSGTGNSGDGGGGGAGDGPGS) are compositionally biased toward gly residues. A compositionally biased stretch (polar residues) spans 340–351 (HPSSEQPSTSQG).

In terms of assembly, forms a heterodimer with timeless (TIM); the complex then translocates into the nucleus. Post-translationally, phosphorylated with a circadian rhythmicity, probably by the double-time protein (dbt). Phosphorylation could be implicated in the stability of per monomer and in the formation of heterodimer per-tim.

Its subcellular location is the nucleus. The protein resides in the cytoplasm. It is found in the perinuclear region. Its function is as follows. Essential for biological clock functions. Determines the period length of circadian and ultradian rhythms; an increase in PER dosage leads to shortened circadian rhythms and a decrease leads to lengthened circadian rhythms. Essential for the circadian rhythmicity of locomotor activity, eclosion behavior, and for the rhythmic component of the male courtship song that originates in the thoracic nervous system. The biological cycle depends on the rhythmic formation and nuclear localization of the TIM-PER complex. Light induces the degradation of TIM, which promotes elimination of PER. Nuclear activity of the heterodimer coordinatively regulates PER and TIM transcription through a negative feedback loop. Behaves as a negative element in circadian transcriptional loop. Does not appear to bind DNA, suggesting indirect transcriptional inhibition. The sequence is that of Period circadian protein (per) from Drosophila nebulosa (Fruit fly).